The chain runs to 54 residues: Large ribosomal subunit protein uL15 (54 aa).

The span at 1-30 (MPSRLRXTRKLRGHVSHGHGRIGKHRKHPG) shows a compositional bias: basic residues. Positions 1–42 (MPSRLRXTRKLRGHVSHGHGRIGKHRKHPGGRGNAGGMHHHR) are disordered. Residue histidine 39 is modified to (3S)-3-hydroxyhistidine. Lysine 47 is subject to N6-acetyllysine.

It belongs to the universal ribosomal protein uL15 family. Component of the large ribosomal subunit. Post-translationally, hydroxylated on His-39 by MINA.

The protein resides in the cytoplasm. Component of the large ribosomal subunit. The ribosome is a large ribonucleoprotein complex responsible for the synthesis of proteins in the cell. The protein is Large ribosomal subunit protein uL15 (RPL27A) of Sus scrofa (Pig).